Here is a 197-residue protein sequence, read N- to C-terminus: Nucleoid occlusion factor SlmA (197 aa).

Residues 7–67 (INRREHILQC…GLIEFIEDAI (61 aa)) form the HTH tetR-type domain. The segment at residues 30–49 (TTAKLAAEVGVSEAALYRHF) is a DNA-binding region (H-T-H motif). A coiled-coil region spans residues 110 to 130 (ALLGENERLRSRIDVLFAKIE).

The protein belongs to the nucleoid occlusion factor SlmA family. Homodimer. Interacts with FtsZ.

Its subcellular location is the cytoplasm. The protein localises to the nucleoid. Required for nucleoid occlusion (NO) phenomenon, which prevents Z-ring formation and cell division over the nucleoid. Acts as a DNA-associated cell division inhibitor that binds simultaneously chromosomal DNA and FtsZ, and disrupts the assembly of FtsZ polymers. SlmA-DNA-binding sequences (SBS) are dispersed on non-Ter regions of the chromosome, preventing FtsZ polymerization at these regions. The chain is Nucleoid occlusion factor SlmA from Shewanella frigidimarina (strain NCIMB 400).